The chain runs to 441 residues: Endothelin receptor type B (441 aa).

A signal peptide spans 1 to 26; sequence MQPLPSLCGRALVALILACGVAGIQA. The Extracellular segment spans residues 27–100; sequence EEREFPPAGA…GPIEIKETFK (74 aa). The segment at 30 to 87 is disordered; that stretch reads EFPPAGATQPLPGTGEMMETPTETSWPGRSNASDPRSSATPQIPRGGRMAGIPPRTPP. Positions 41 to 53 are enriched in low complexity; sequence PGTGEMMETPTET. Residues 54-70 show a composition bias toward polar residues; the sequence is SWPGRSNASDPRSSATP. Residues 101–125 form a helical membrane-spanning segment; that stretch reads YINTVVSCLVFVLGIIGNSTLLRII. The Cytoplasmic portion of the chain corresponds to 126 to 136; it reads YKNKCMRNGPN. The helical transmembrane segment at 137–162 threads the bilayer; it reads ILIASLALGDLLHIIIDIPINTYKLL. Residues 163–174 lie on the Extracellular side of the membrane; that stretch reads AKDWPFGVEMCK. Residues cysteine 173 and cysteine 254 are joined by a disulfide bond. Residues 175–196 form a helical membrane-spanning segment; it reads LVPFIQKASVGITVLSLCALSI. The Cytoplasmic segment spans residues 197–217; it reads DRYRAVASWSRIKGIGVPKWT. Residues 218 to 242 form a helical membrane-spanning segment; that stretch reads AVEIVLIWVVSVVLAVPEAVGFDII. The Extracellular portion of the chain corresponds to 243-270; the sequence is TSDHIGNKLRICLLHPTQKTAFMQFYKT. The chain crosses the membrane as a helical span at residues 271 to 295; sequence AKDWWLFSFYFCLPLAITALFYTLM. Residues 296–323 are Cytoplasmic-facing; sequence TCEMLRKKSGMQIALNDHLKQRREVAKT. Serine 304 bears the Phosphoserine mark. A helical membrane pass occupies residues 324 to 349; the sequence is VFCLVLVFALCWLPLHLSRILKLTLY. Topologically, residues 350 to 361 are extracellular; that stretch reads DQHDPRRCEFLS. Residues 362–388 form a helical membrane-spanning segment; the sequence is FLLVLDYIGINMASLNSCINPIALYLV. Topologically, residues 389 to 441 are cytoplasmic; that stretch reads SKRFKNCFKSCLCCWCQSFEEKQSLEEKQSCLKFKANDHGYDNFRSSNKYSSS. S-palmitoyl cysteine attachment occurs at residues cysteine 402 and cysteine 404. Phosphoserine is present on residues serine 418, serine 434, and serine 435. Phosphotyrosine is present on tyrosine 438. Residues serine 439, serine 440, and serine 441 each carry the phosphoserine modification.

Belongs to the G-protein coupled receptor 1 family. Endothelin receptor subfamily. EDNRB sub-subfamily. Post-translationally, it is not sure whether phosphorylation is on Ser-434 or Ser-435.

Its subcellular location is the cell membrane. In terms of biological role, non-specific receptor for endothelin 1, 2, and 3. Mediates its action by association with G proteins that activate a phosphatidylinositol-calcium second messenger system. In Bos taurus (Bovine), this protein is Endothelin receptor type B (EDNRB).